Reading from the N-terminus, the 1122-residue chain is Adhesin P1 (1122 aa).

An N-terminal signal peptide occupies residues 1 to 30 (MKKLIFKLSVGITPLALIGLGSFGLAVSGA). 3 disordered regions span residues 183–209 (AGDT…GGAV), 244–273 (DYNS…GGRT), and 544–563 (QNSG…NGNE). Gly residues predominate over residues 195 to 208 (AGGGSGSSAAGGGA). Polar residues predominate over residues 259–273 (LDSSESSESINGGRT). A helical transmembrane segment spans residues 997–1021 (VLPVAISIPIIIIALALALGLGIGI). The tract at residues 1066–1122 (KTPQMLQANKKDGASSPSKPSAPAAKKPTGPTKPSAPGAKPTAPAKPKAPAPTKKIE) is disordered. Residues 1079 to 1122 (ASSPSKPSAPAAKKPTGPTKPSAPGAKPTAPAKPKAPAPTKKIE) show a composition bias toward low complexity.

Belongs to the adhesin P1 family.

The protein localises to the cell membrane. Its function is as follows. Could be involved in cytadherence. In Mycoplasmoides gallisepticum (Mycoplasma gallisepticum), this protein is Adhesin P1 (gapA).